Consider the following 250-residue polypeptide: mRNA-decapping protein g5R (250 aa).

Residues 97-239 (QKFRKNWLLP…NLEPMIGPAF (143 aa)) enclose the Nudix hydrolase domain. The Nudix box signature appears at 132 to 153 (GKPKEDESDLTCAIREFEEETG). Glu-138 provides a ligand contact to Mg(2+). Glu-147 serves as the catalytic Nucleophile. Mg(2+) is bound by residues Glu-151 and Asp-173.

This sequence belongs to the Nudix hydrolase family. DIPP subfamily. As to quaternary structure, interacts with host RPL23A. Mg(2+) serves as cofactor. Requires Mn(2+) as cofactor.

The protein resides in the host rough endoplasmic reticulum. It catalyses the reaction diphospho-myo-inositol polyphosphate + H2O = myo-inositol polyphosphate + phosphate.. Its function is as follows. Decapping enzyme required for the removal of the 5'-end m7GpppN cap tethered to viral and host mRNAs to allow their decay in cells. May therefore accelerate viral and cellular mRNA turnover to eliminate competing host mRNAs and allow stage-specific synthesis of viral proteins. Acceleration of the turnover of cellular transcripts may even promote the shutoff of host protein synthesis. In addition to the mRNA cap, g5R also efficiently hydrolyzes diphosphoinositol polyphosphates. Down-regulation of the level of PP-InsP5 (diphosphoinositol pentakisphosphate) may play a role in viral manipulation of the cellular secretory pathway, a step necessary for the formation of virions. Binds viral and cellular poly(A) mRNAs, thereby decreasing both types of mRNAs. This Ornithodoros (relapsing fever ticks) protein is mRNA-decapping protein g5R.